Reading from the N-terminus, the 493-residue chain is Acetyl-coenzyme A carboxylase carboxyl transferase subunit beta (493 aa).

In terms of domain architecture, CoA carboxyltransferase N-terminal spans 231-493 (LWVQCENCYG…FKLHAFFPLN (263 aa)). The Zn(2+) site is built by Cys235, Cys238, Cys254, and Cys257. The C4-type zinc-finger motif lies at 235 to 257 (CENCYGLNYKKFLKSKINLCEQC).

The protein belongs to the AccD/PCCB family. As to quaternary structure, acetyl-CoA carboxylase is a heterohexamer composed of biotin carboxyl carrier protein, biotin carboxylase and 2 subunits each of ACCase subunit alpha and ACCase plastid-coded subunit beta (accD). The cofactor is Zn(2+).

Its subcellular location is the plastid stroma. It catalyses the reaction N(6)-carboxybiotinyl-L-lysyl-[protein] + acetyl-CoA = N(6)-biotinyl-L-lysyl-[protein] + malonyl-CoA. It functions in the pathway lipid metabolism; malonyl-CoA biosynthesis; malonyl-CoA from acetyl-CoA: step 1/1. Its function is as follows. Component of the acetyl coenzyme A carboxylase (ACC) complex. Biotin carboxylase (BC) catalyzes the carboxylation of biotin on its carrier protein (BCCP) and then the CO(2) group is transferred by the transcarboxylase to acetyl-CoA to form malonyl-CoA. This is Acetyl-coenzyme A carboxylase carboxyl transferase subunit beta from Epifagus virginiana (Beechdrops).